Consider the following 450-residue polypeptide: MSRLFGTDGVRGLANGLLTAELALSLAQAAAVVLGHDQLAEGKRPRAVIARDPRASGEFIGAAVEAGLASAGVDVYDAGVLPTPAAAYLIASLDADFGVMISASHNPAADNGIKFFARGGQKLADDAEDAIEAQLKVKPHRPTGVGVGRIQRFSDAEDRYILHLLTTLPHRLDGLTVVLDCAHGAASGCSPQVFKDAGAKVIVIGAEPDGLNINDGVGSTHLGPLQEAVVANGADLGIAHDGDADRCLAVDHEGNVIDGDQIMAILALALKADGKLKDNVLVATVMSNLGLKIALREAGISIRETAVGDRYVLEAMRQGGFNLGGEQSGHVIFADHATTGDGVLTGLQLAAQVARTRRSLQQLATAMTKLPQLMINVKGVDKTRAQTDEGVREAVARAEQELGQTGRVLLRPSGTEALVRVMVEAGDMATATRICEDLAEVIEKRLALAV.

Ser104 (phosphoserine intermediate) is an active-site residue. Mg(2+) is bound by residues Ser104, Asp241, Asp243, and Asp245. Ser104 carries the phosphoserine modification.

The protein belongs to the phosphohexose mutase family. It depends on Mg(2+) as a cofactor. In terms of processing, activated by phosphorylation.

The enzyme catalyses alpha-D-glucosamine 1-phosphate = D-glucosamine 6-phosphate. Its function is as follows. Catalyzes the conversion of glucosamine-6-phosphate to glucosamine-1-phosphate. This is Phosphoglucosamine mutase from Renibacterium salmoninarum (strain ATCC 33209 / DSM 20767 / JCM 11484 / NBRC 15589 / NCIMB 2235).